The chain runs to 741 residues: Multifunctional procollagen lysine hydroxylase and glycosyltransferase LH3 (741 aa).

The first 27 residues, methionine 1–alanine 27, serve as a signal peptide directing secretion. Residues serine 28 to proline 293 are required for glycosyltransferase activity. Valine 47 to threonine 49 contributes to the UDP binding site. N-linked (GlcNAc...) asparagine glycosylation occurs at asparagine 66. Mn(2+)-binding residues include aspartate 115, aspartate 118, and histidine 256. Aspartate 115 to tyrosine 117 is a binding site for UDP. Glycine 259–lysine 262 lines the UDP pocket. Intrachain disulfides connect cysteine 282–cysteine 285 and cysteine 382–cysteine 388. The interval proline 298–histidine 523 is accessory region. N-linked (GlcNAc...) asparagine glycosylation occurs at asparagine 551. A disulfide bridge links cysteine 566 with cysteine 701. Residues arginine 602 and tyrosine 659 each coordinate 2-oxoglutarate. One can recognise a Fe2OG dioxygenase domain in the interval arginine 650 to proline 741. Histidine 670 and aspartate 672 together coordinate Fe cation. The interval threonine 675 to leucine 718 is important for dimerization. Residue asparagine 679 coordinates 2-oxoglutarate. Histidine 722 contacts Fe cation. Position 732 (arginine 732) interacts with 2-oxoglutarate.

Homodimer. Fe(2+) serves as cofactor. L-ascorbate is required as a cofactor. The cofactor is Mn(2+). As to expression, detected in heart and bone.

It is found in the rough endoplasmic reticulum. The protein resides in the endoplasmic reticulum lumen. It localises to the endoplasmic reticulum membrane. Its subcellular location is the secreted. The protein localises to the extracellular space. It catalyses the reaction L-lysyl-[collagen] + 2-oxoglutarate + O2 = (5R)-5-hydroxy-L-lysyl-[collagen] + succinate + CO2. It carries out the reaction (5R)-5-hydroxy-L-lysyl-[collagen] + UDP-alpha-D-galactose = (5R)-5-O-(beta-D-galactosyl)-5-hydroxy-L-lysyl-[collagen] + UDP + H(+). The catalysed reaction is (5R)-5-O-(beta-D-galactosyl)-5-hydroxy-L-lysyl-[collagen] + UDP-alpha-D-glucose = (5R)-5-O-[alpha-D-glucosyl-(1-&gt;2)-beta-D-galactosyl]-5-hydroxy-L-lysyl-[collagen] + UDP + H(+). Functionally, multifunctional enzyme that catalyzes a series of post-translational modifications on Lys residues in procollagen. Plays a redundant role in catalyzing the formation of hydroxylysine residues in -Xaa-Lys-Gly- sequences in collagens. Plays a redundant role in catalyzing the transfer of galactose onto hydroxylysine groups, giving rise to galactosyl 5-hydroxylysine. Has an essential role by catalyzing the subsequent transfer of glucose moieties, giving rise to 1,2-glucosylgalactosyl-5-hydroxylysine residues. Catalyzes hydroxylation and glycosylation of Lys residues in the MBL1 collagen-like domain, giving rise to hydroxylysine and 1,2-glucosylgalactosyl-5-hydroxylysine residues. Catalyzes hydroxylation and glycosylation of Lys residues in the ADIPOQ collagen-like domain, giving rise to hydroxylysine and 1,2-glucosylgalactosyl-5-hydroxylysine residues. Essential for normal biosynthesis and secretion of type IV collagens. Essential for normal formation of basement membranes. This chain is Multifunctional procollagen lysine hydroxylase and glycosyltransferase LH3 (Plod3), found in Rattus norvegicus (Rat).